The following is a 224-amino-acid chain: Synaptogyrin-2 (224 aa).

Met-1 carries the post-translational modification N-acetylmethionine. Phosphoserine is present on Ser-3. One can recognise an MARVEL domain in the interval 20–171 (YVSQPQVVTR…LASLAYQRYK (152 aa)). Helical transmembrane passes span 30–50 (LVSMVLALIVFSCIFGEGYIN), 73–93 (AIGVLAFLASAFFLVVDAFFS), 105–125 (VIGDLLFSALWTFLWFVGFCF), and 147–167 (AAITFSFFSIFSWGVLASLAY).

This sequence belongs to the synaptogyrin family. Post-translationally, may be tyrosine phosphorylated by Src. Ubiquitously expressed with lower expression in brain (at protein level).

The protein resides in the cytoplasmic vesicle membrane. It localises to the cytoplasmic vesicle. Its subcellular location is the secretory vesicle. It is found in the synaptic vesicle membrane. Its function is as follows. May play a role in regulated exocytosis. In neuronal cells, modulates the localization of synaptophysin/SYP into synaptic-like microvesicles and may therefore play a role in the formation and/or the maturation of this vesicles. May also play a role in GLUT4 storage and transport to the plasma membrane. In Rattus norvegicus (Rat), this protein is Synaptogyrin-2.